Here is a 433-residue protein sequence, read N- to C-terminus: MIKYRNSSIHIQSVRGMHDCLPKDVIQWQYIEDVLKTILNGYGYNEIRFPIIECTDLFKRSIGEVTDVVEKEMYTFIDQHGNDLTLRPEGTSGCVRAGIENSLFYHQEPRLWYMGPMFRRERPQKGRYRQFHQFSAEAFGCVGPDIDVELILITNRCWKELGISNYLTLELNSIGLLSSRMIYRKKLISFLEKNKHNLDDSSKRRLYSNPMRILDTKNVKIKELLAHAPVLSDYLDDCSKNHFLNLCRLLDIANVTYIVNPYLVRGLDYYNRTVFEWVTDKLGVKKTICAGGRYDDLIKQLGGGSIPAVGFAIGLERVVLLMKLIKSSIINTRNVYIDVYLIRLGTYYQEYSIKLSEHIREKLPFLRLMVDCGGGNFKQQIDRAEKNNSRFVIVVDDKNFFEQTIILKELQSKKQEILKYDEIILKLRKIYNM.

It belongs to the class-II aminoacyl-tRNA synthetase family. As to quaternary structure, homodimer.

Its subcellular location is the cytoplasm. It carries out the reaction tRNA(His) + L-histidine + ATP = L-histidyl-tRNA(His) + AMP + diphosphate + H(+). The protein is Histidine--tRNA ligase of Blochmanniella floridana.